Consider the following 25-residue polypeptide: Germin-like protein (25 aa).

The protein belongs to the germin family. Oligomer (believed to be a pentamer but probably hexamer). Post-translationally, the three different mass spectrometry results appear to arise from different glycosylation variants.

The protein resides in the secreted. It is found in the extracellular space. Its subcellular location is the apoplast. Its function is as follows. May play a role in plant defense. Probably has no oxalate oxidase activity even if the active site is conserved. This is Germin-like protein from Citrus sinensis (Sweet orange).